Reading from the N-terminus, the 303-residue chain is UDP-3-O-acyl-N-acetylglucosamine deacetylase (303 aa).

Residues H79, H238, and D242 each contribute to the Zn(2+) site. The Proton donor role is filled by H265.

Belongs to the LpxC family. Zn(2+) serves as cofactor.

The catalysed reaction is a UDP-3-O-[(3R)-3-hydroxyacyl]-N-acetyl-alpha-D-glucosamine + H2O = a UDP-3-O-[(3R)-3-hydroxyacyl]-alpha-D-glucosamine + acetate. Its pathway is glycolipid biosynthesis; lipid IV(A) biosynthesis; lipid IV(A) from (3R)-3-hydroxytetradecanoyl-[acyl-carrier-protein] and UDP-N-acetyl-alpha-D-glucosamine: step 2/6. Catalyzes the hydrolysis of UDP-3-O-myristoyl-N-acetylglucosamine to form UDP-3-O-myristoylglucosamine and acetate, the committed step in lipid A biosynthesis. This is UDP-3-O-acyl-N-acetylglucosamine deacetylase from Pseudoalteromonas translucida (strain TAC 125).